A 71-amino-acid chain; its full sequence is Sec-independent protein translocase protein TatA (71 aa).

Residues Leu-9 to Gly-29 traverse the membrane as a helical segment. The segment at Phe-43–Ala-71 is disordered. The span at Ala-52–Ala-71 shows a compositional bias: polar residues.

Belongs to the TatA/E family. In terms of assembly, the Tat system comprises two distinct complexes: a TatABC complex, containing multiple copies of TatA, TatB and TatC subunits, and a separate TatA complex, containing only TatA subunits. Substrates initially bind to the TatABC complex, which probably triggers association of the separate TatA complex to form the active translocon.

Its subcellular location is the cell inner membrane. Its function is as follows. Part of the twin-arginine translocation (Tat) system that transports large folded proteins containing a characteristic twin-arginine motif in their signal peptide across membranes. TatA could form the protein-conducting channel of the Tat system. This is Sec-independent protein translocase protein TatA from Anaeromyxobacter dehalogenans (strain 2CP-C).